Consider the following 1129-residue polypeptide: ISWI chromatin-remodeling complex ATPase ISW1 (1129 aa).

Residues 144 to 177 (KANGKGKGKHQDVRRRKTEHEEDAELLKEEDSDD) form a disordered region. The segment covering 147–160 (GKGKGKHQDVRRRK) has biased composition (basic residues). The span at 164–177 (EEDAELLKEEDSDD) shows a compositional bias: acidic residues. The 166-residue stretch at 208-373 (VSLHKNKIAG…WALLNFLLPD (166 aa)) folds into the Helicase ATP-binding domain. ATP is bound at residue 221 to 228 (DEMGLGKT). The DEAH box motif lies at 324–327 (DEAH). The 152-residue stretch at 506-657 (VLDKLLKKLK…QLVIQQNRTS (152 aa)) folds into the Helicase C-terminal domain. The segment at 683-705 (FKSGTSTGSAGTPEPGSGEKGDD) is disordered. Position 694 is a phosphothreonine (Thr-694). Ser-846 bears the Phosphoserine mark. SANT domains lie at 882–935 (EGFT…SNIE) and 988–1052 (NKRT…LLQC). Residues 1073 to 1108 (KEDENGKRIREEFADQTANEKENVDGVESKKAKIED) show a composition bias toward basic and acidic residues. Positions 1073–1129 (KEDENGKRIREEFADQTANEKENVDGVESKKAKIEDTSNVGTEQLVAEKIPENETTH) are disordered.

Belongs to the SNF2/RAD54 helicase family. ISWI subfamily. As to quaternary structure, component of the ISW1A complex, which at least consists of ISW1 and IOC3. Component of the ISW1B complex, which at least consists of ISW1, IOC2 and IOC4.

It is found in the nucleus. Its function is as follows. Catalytic component of ISW1-type complexes, which act by remodeling the chromatin by catalyzing an ATP-dependent alteration in the structure of nucleosomal DNA. They are involved in coordinating transcriptional repression, activation and elongation phases. The ISW1A complex represses gene expression at initiation through specific positioning of a promoter proximal dinucleosome. The ISW1B complex acts within coding regions to control the amount of RNA polymerase II released into productive elongation and to coordinate elongation with termination and pre-mRNA processing. The protein is ISWI chromatin-remodeling complex ATPase ISW1 (ISW1) of Saccharomyces cerevisiae (strain ATCC 204508 / S288c) (Baker's yeast).